The following is a 398-amino-acid chain: Tyrosine--tRNA ligase (398 aa).

The 'HIGH' region motif lies at 48–57 (PTGADIHLGH). Positions 235 to 239 (KMSKS) match the 'KMSKS' region motif. Lys-238 serves as a coordination point for ATP. The 65-residue stretch at 334–398 (VKLAYLLGAT…GKNKFVRLVL (65 aa)) folds into the S4 RNA-binding domain.

Belongs to the class-I aminoacyl-tRNA synthetase family. TyrS type 2 subfamily. Homodimer.

It is found in the cytoplasm. The catalysed reaction is tRNA(Tyr) + L-tyrosine + ATP = L-tyrosyl-tRNA(Tyr) + AMP + diphosphate + H(+). Functionally, catalyzes the attachment of tyrosine to tRNA(Tyr) in a two-step reaction: tyrosine is first activated by ATP to form Tyr-AMP and then transferred to the acceptor end of tRNA(Tyr). This Trichormus variabilis (strain ATCC 29413 / PCC 7937) (Anabaena variabilis) protein is Tyrosine--tRNA ligase.